A 118-amino-acid polypeptide reads, in one-letter code: Holo-[acyl-carrier-protein] synthase (118 aa).

2 residues coordinate Mg(2+): Asp8 and Glu58.

It belongs to the P-Pant transferase superfamily. AcpS family. The cofactor is Mg(2+).

It localises to the cytoplasm. The enzyme catalyses apo-[ACP] + CoA = holo-[ACP] + adenosine 3',5'-bisphosphate + H(+). In terms of biological role, transfers the 4'-phosphopantetheine moiety from coenzyme A to a Ser of acyl-carrier-protein. The chain is Holo-[acyl-carrier-protein] synthase from Listeria welshimeri serovar 6b (strain ATCC 35897 / DSM 20650 / CCUG 15529 / CIP 8149 / NCTC 11857 / SLCC 5334 / V8).